The sequence spans 43 residues: Protein PsbN (43 aa).

The helical transmembrane segment at 5–27 threads the bilayer; that stretch reads TLVTISISCLLVSFTGYALYTAF.

It belongs to the PsbN family.

The protein localises to the plastid. It localises to the chloroplast thylakoid membrane. Its function is as follows. May play a role in photosystem I and II biogenesis. The chain is Protein PsbN from Pinus koraiensis (Korean pine).